The primary structure comprises 443 residues: MRILGSLPNNIRKCTFKLILQKRYSHTDILKELLYDISDSQKFIPSASPIASNLLRVSSYGKLSSLFIEYSKARSKKEFDQLRTSDFQSILRSVVCPKNGKNIRHRDRDLVSLQIKLILQDADRLGIQFNIVDYTHILRVAMYTGNKHILEYIVARVKEKRIRPSVDYFNAILGVIGGNRWSLSKFQSPAFRGSPVTEPVSGKMLDMIEVDFPNYDLVPNSTTYDYLMVGLSRDGKIREIYDLIDTVWGINENSSSKKVDCGNVTFPTHHTVFSIISALGYLGDVSSAVSLSRKLTSVYKINFPELAWRYIIYWSIASLQFRAPAGHARIKNIELFIRLYSQMYRHCVPIIEIYDTSIKFYMKHGRFGLLEKVCESWTKQFLGSLEKQNNEVKKKHLQLLEKQISKLMRYAETERPHDTKRVSVKWSNVLNQIHSSVGDPAKP.

A mitochondrion-targeting transit peptide spans 1–13 (MRILGSLPNNIRK). PPR repeat units follow at residues 130–164 (NIVDYTHILRVAMYTGNKHILEYIVARVKEKRIRP) and 220–254 (NSTTYDYLMVGLSRDGKIREIYDLIDTVWGINENS).

The protein localises to the mitochondrion. In terms of biological role, mitochondrial RNA-binding protein required for the stability of the atp9 mRNA. The protein is Pentatricopeptide repeat-containing protein 6, mitochondrial (ppr6) of Schizosaccharomyces pombe (strain 972 / ATCC 24843) (Fission yeast).